A 354-amino-acid chain; its full sequence is 3-dehydroquinate synthase (354 aa).

Residues 100-104 (GATGD), 124-125 (TT), lysine 136, lysine 145, and 163-166 (FLKT) each bind NAD(+). The Zn(2+) site is built by glutamate 178, histidine 242, and histidine 256.

The protein belongs to the sugar phosphate cyclases superfamily. Dehydroquinate synthase family. NAD(+) serves as cofactor. Requires Co(2+) as cofactor. It depends on Zn(2+) as a cofactor.

Its subcellular location is the cytoplasm. The catalysed reaction is 7-phospho-2-dehydro-3-deoxy-D-arabino-heptonate = 3-dehydroquinate + phosphate. Its pathway is metabolic intermediate biosynthesis; chorismate biosynthesis; chorismate from D-erythrose 4-phosphate and phosphoenolpyruvate: step 2/7. Functionally, catalyzes the conversion of 3-deoxy-D-arabino-heptulosonate 7-phosphate (DAHP) to dehydroquinate (DHQ). The polypeptide is 3-dehydroquinate synthase (Staphylococcus aureus (strain MSSA476)).